We begin with the raw amino-acid sequence, 344 residues long: N-acetyl-gamma-glutamyl-phosphate reductase (344 aa).

The active site involves C150.

It belongs to the NAGSA dehydrogenase family. Type 1 subfamily.

The protein resides in the cytoplasm. The catalysed reaction is N-acetyl-L-glutamate 5-semialdehyde + phosphate + NADP(+) = N-acetyl-L-glutamyl 5-phosphate + NADPH + H(+). It functions in the pathway amino-acid biosynthesis; L-arginine biosynthesis; N(2)-acetyl-L-ornithine from L-glutamate: step 3/4. Functionally, catalyzes the NADPH-dependent reduction of N-acetyl-5-glutamyl phosphate to yield N-acetyl-L-glutamate 5-semialdehyde. This Pseudomonas fluorescens (strain SBW25) protein is N-acetyl-gamma-glutamyl-phosphate reductase.